The primary structure comprises 630 residues: Chaperone protein DnaK (630 aa).

Phosphothreonine; by autocatalysis is present on T197. Residues 604 to 618 (KNNESVKNNESVKNN) are compositionally biased toward polar residues. Residues 604 to 630 (KNNESVKNNESVKNNESVKDVDFEEIK) form a disordered region. Basic and acidic residues predominate over residues 619 to 630 (ESVKDVDFEEIK).

Belongs to the heat shock protein 70 family.

Its function is as follows. Acts as a chaperone. In Karelsulcia muelleri (strain GWSS) (Sulcia muelleri), this protein is Chaperone protein DnaK.